Here is a 331-residue protein sequence, read N- to C-terminus: Tetraacyldisaccharide 4'-kinase (331 aa).

ATP is bound at residue 55 to 62 (SVGGNGKT).

Belongs to the LpxK family.

It carries out the reaction a lipid A disaccharide + ATP = a lipid IVA + ADP + H(+). The protein operates within glycolipid biosynthesis; lipid IV(A) biosynthesis; lipid IV(A) from (3R)-3-hydroxytetradecanoyl-[acyl-carrier-protein] and UDP-N-acetyl-alpha-D-glucosamine: step 6/6. Transfers the gamma-phosphate of ATP to the 4'-position of a tetraacyldisaccharide 1-phosphate intermediate (termed DS-1-P) to form tetraacyldisaccharide 1,4'-bis-phosphate (lipid IVA). In Aeromonas salmonicida (strain A449), this protein is Tetraacyldisaccharide 4'-kinase.